The following is a 374-amino-acid chain: Aminomethyltransferase (374 aa).

The protein belongs to the GcvT family. As to quaternary structure, the glycine cleavage system is composed of four proteins: P, T, L and H.

The catalysed reaction is N(6)-[(R)-S(8)-aminomethyldihydrolipoyl]-L-lysyl-[protein] + (6S)-5,6,7,8-tetrahydrofolate = N(6)-[(R)-dihydrolipoyl]-L-lysyl-[protein] + (6R)-5,10-methylene-5,6,7,8-tetrahydrofolate + NH4(+). The glycine cleavage system catalyzes the degradation of glycine. In Edwardsiella ictaluri (strain 93-146), this protein is Aminomethyltransferase.